We begin with the raw amino-acid sequence, 554 residues long: CTP synthase (554 aa).

An amidoligase domain region spans residues 1-265 (MTPLIFVTGG…DEIVVNQLKL (265 aa)). S13 contacts CTP. UTP is bound at residue S13. Residue 14 to 19 (SLGKGI) coordinates ATP. 2 residues coordinate Mg(2+): D71 and E139. CTP contacts are provided by residues 146-148 (DIE), 186-191 (KTKPTQ), and K222. Residues 186 to 191 (KTKPTQ) and K222 each bind UTP. The Glutamine amidotransferase type-1 domain occupies 292-545 (TIAVVGKYVD…IRAARERKAG (254 aa)). G353 serves as a coordination point for L-glutamine. C380 (nucleophile; for glutamine hydrolysis) is an active-site residue. L-glutamine is bound by residues 381–384 (YGMQ), E404, and R471. Active-site residues include H518 and E520.

This sequence belongs to the CTP synthase family. As to quaternary structure, homotetramer.

It catalyses the reaction UTP + L-glutamine + ATP + H2O = CTP + L-glutamate + ADP + phosphate + 2 H(+). The catalysed reaction is L-glutamine + H2O = L-glutamate + NH4(+). It carries out the reaction UTP + NH4(+) + ATP = CTP + ADP + phosphate + 2 H(+). The protein operates within pyrimidine metabolism; CTP biosynthesis via de novo pathway; CTP from UDP: step 2/2. Allosterically activated by GTP, when glutamine is the substrate; GTP has no effect on the reaction when ammonia is the substrate. The allosteric effector GTP functions by stabilizing the protein conformation that binds the tetrahedral intermediate(s) formed during glutamine hydrolysis. Inhibited by the product CTP, via allosteric rather than competitive inhibition. In terms of biological role, catalyzes the ATP-dependent amination of UTP to CTP with either L-glutamine or ammonia as the source of nitrogen. Regulates intracellular CTP levels through interactions with the four ribonucleotide triphosphates. The chain is CTP synthase from Stenotrophomonas maltophilia (strain K279a).